The following is a 341-amino-acid chain: MKALSKLKAEEGIWMTDVPEPEVGHNDLLIKIRKTAICGTDVHIYNWDDWSQKTIPVPMVVGHEYVGEVVGIGQEVKGFKIGDRVSGEGHITCGHCRNCRGGRTHLCRNTTGVGVNRPGCFAEYLVIPALNAFKIPDNISDDLASIFDPFGNAVHTALSFDLVGEDVLVSGAGPIGVMAAAVAKHVGARHVVITDVNEYRLELARKMGVTRAVNVAKESLNDVMAELGMTEGFDVGLEMSGAPPAFCTMLDTMNHGGRIAMLGIPPSDMSIDWTKVIFKGLFIKGIYGREMFETWYKMAALIQSGLDLSPIITHRFSIDDFQKGFDAMRSGQSGKVILSWD.

Cysteine 38 provides a ligand contact to Zn(2+). Catalysis depends on charge relay system residues threonine 40 and histidine 43. Histidine 63, glutamate 64, cysteine 93, cysteine 96, cysteine 99, and cysteine 107 together coordinate Zn(2+). Residues isoleucine 175, aspartate 195, arginine 200, 262–264 (LGI), and 286–287 (IY) contribute to the NAD(+) site.

Belongs to the zinc-containing alcohol dehydrogenase family. Homotetramer. Requires Zn(2+) as cofactor.

Its subcellular location is the cytoplasm. The catalysed reaction is L-threonine + NAD(+) = (2S)-2-amino-3-oxobutanoate + NADH + H(+). Its pathway is amino-acid degradation; L-threonine degradation via oxydo-reductase pathway; glycine from L-threonine: step 1/2. Functionally, catalyzes the NAD(+)-dependent oxidation of L-threonine to 2-amino-3-ketobutyrate. This is L-threonine 3-dehydrogenase from Salmonella gallinarum (strain 287/91 / NCTC 13346).